A 175-amino-acid polypeptide reads, in one-letter code: NADH-quinone oxidoreductase subunit I (175 aa).

2 consecutive 4Fe-4S ferredoxin-type domains span residues 69–98 (KRDEQGRERCTSCFCCMWICPADAIYIEAG) and 115–144 (KKFEIDLLRCIFCGMCEEACPKGAIYLDGP). 8 residues coordinate [4Fe-4S] cluster: cysteine 78, cysteine 81, cysteine 84, cysteine 88, cysteine 124, cysteine 127, cysteine 130, and cysteine 134.

Belongs to the complex I 23 kDa subunit family. In terms of assembly, NDH-1 is composed of 14 different subunits. Subunits NuoA, H, J, K, L, M, N constitute the membrane sector of the complex. It depends on [4Fe-4S] cluster as a cofactor.

Its subcellular location is the cell inner membrane. It carries out the reaction a quinone + NADH + 5 H(+)(in) = a quinol + NAD(+) + 4 H(+)(out). Functionally, NDH-1 shuttles electrons from NADH, via FMN and iron-sulfur (Fe-S) centers, to quinones in the respiratory chain. The immediate electron acceptor for the enzyme in this species is believed to be ubiquinone. Couples the redox reaction to proton translocation (for every two electrons transferred, four hydrogen ions are translocated across the cytoplasmic membrane), and thus conserves the redox energy in a proton gradient. This Leptospira borgpetersenii serovar Hardjo-bovis (strain JB197) protein is NADH-quinone oxidoreductase subunit I.